Reading from the N-terminus, the 1687-residue chain is A-kinase anchor protein 12 (1687 aa).

Positions 1–108 (MGAGSSTEQR…EKDRVEEMAA (108 aa)) are disordered. Residue Gly-2 is the site of N-myristoyl glycine attachment. Phosphoserine is present on residues Ser-11, Ser-18, Ser-22, and Ser-27. Low complexity predominate over residues 30–48 (GPAAEASGAAGDPADADPA). Positions 52-62 (PQKNGQLSTVN) are enriched in polar residues. Residues 75–88 (ENQEGQEEEVVDED) are compositionally biased toward acidic residues. Residues 89-105 (VGQRESEDVREKDRVEE) are compositionally biased toward basic and acidic residues. A phosphoserine mark is found at Ser-136 and Ser-204. Disordered stretches follow at residues 175–282 (SDTV…ETTS) and 298–355 (KTSF…DYEK). Positions 213-230 (ASKESELKQSTEKQEGTL) are enriched in basic and acidic residues. Residues Ser-235 and Ser-245 each carry the phosphoserine modification. The segment covering 247–259 (QAAEEEAKDEGEE) has biased composition (acidic residues). An involved in PKC-binding region spans residues 254–544 (KDEGEEKQEK…QHIHTESPES (291 aa)). A phosphoserine mark is found at Ser-268, Ser-271, Ser-274, and Ser-304. Low complexity predominate over residues 268–282 (SPESPSSPVSSETTS). The segment covering 303-321 (KSKEDDLETAEKRKEQEAE) has biased composition (basic and acidic residues). A Phosphothreonine modification is found at Thr-331. The segment covering 334–344 (ASEEQEPAEDT) has biased composition (acidic residues). Phosphoserine is present on residues Ser-335 and Ser-350. Tyr-353 bears the Phosphotyrosine mark. Ser-371 carries the phosphoserine modification. Residues 402–481 (VEKTEEEQGG…EKTLPKHPEG (80 aa)) form a disordered region. Positions 417–426 (GGVVVEGTGE) are enriched in low complexity. A Phosphoserine modification is found at Ser-469. Residues 470 to 480 (PEEKTLPKHPE) show a composition bias toward basic and acidic residues. Phosphoserine is present on residues Ser-491, Ser-507, and Ser-509. The tract at residues 496–828 (KVQGSPLKKL…INEDDPDVPA (333 aa)) is disordered. Low complexity predominate over residues 499–513 (GSPLKKLFSSSGLKK). A compositionally biased stretch (basic residues) spans 514-523 (LSGKKQKGKR). The segment covering 533-550 (EYQHIHTESPESADEQKG) has biased composition (basic and acidic residues). 6 positions are modified to phosphoserine: Ser-541, Ser-544, Ser-585, Ser-599, Ser-614, and Ser-616. Positions 594–614 (ITPWASFKKMVTPKKRVRRPS) match the AKAP CaM-binding 1 motif. Positions 612 to 626 (RPSESDKEEELEKVK) are enriched in basic and acidic residues. Over residues 628-639 (ATLSSTDSTVSE) the composition is skewed to polar residues. Thr-629 carries the phosphothreonine modification. Phosphoserine is present on residues Ser-631, Ser-632, Ser-635, and Ser-638. Residues 642-661 (DEVKTVGEEQKPEEPKRRVD) show a composition bias toward basic and acidic residues. Phosphoserine occurs at positions 683, 684, and 685. Basic and acidic residues predominate over residues 697–711 (DSHRAEEASKDKEAG). A compositionally biased stretch (polar residues) spans 717-726 (ASTQEQDQAQ). Over residues 727–744 (GSSSPEPAGSPSEGEGVS) the composition is skewed to low complexity. A phosphoserine mark is found at Ser-736, Ser-748, Ser-770, Ser-771, and Ser-789. Positions 743 to 763 (VSTWESFKRLVTPRKKSKSKL) match the AKAP CaM-binding 2 motif. The AKAP CaM-binding 3 motif lies at 784 to 804 (EESWVSIKKFIPGRRKKRADG). Thr-871 carries the phosphothreonine modification. Position 873 is a phosphoserine (Ser-873). The tract at residues 959–981 (ETSEALRTEEVTEASGAEETTDM) is disordered. Lys-1030 participates in a covalent cross-link: Glycyl lysine isopeptide (Lys-Gly) (interchain with G-Cter in SUMO1). Residues 1035-1045 (VPATQTVQRTG) show a composition bias toward polar residues. Disordered regions lie at residues 1035–1105 (VPAT…EVTA), 1125–1221 (AVAP…LAAA), 1277–1361 (CQEK…QDKA), and 1443–1487 (TPAP…TAIE). Residue Ser-1059 is modified to Phosphoserine. Positions 1130–1157 (SSETLTDSETNGSTPLADSDTADGTQQD) are enriched in polar residues. Residues 1199 to 1211 (QEEHGEEPGRDVL) are compositionally biased toward basic and acidic residues. Ser-1289 bears the Phosphoserine mark. Basic and acidic residues predominate over residues 1298–1310 (DVEKEKRETKPEQ). Ser-1348, Ser-1352, and Ser-1354 each carry phosphoserine. Over residues 1462–1487 (QRERSEEEDKPDAGPDADGKESTAIE) the composition is skewed to basic and acidic residues. The interval 1498 to 1511 (ELESKSNKIVLNVI) is RII-binding. 2 disordered regions span residues 1522–1582 (ETAP…GSAS) and 1599–1687 (IEKL…LAES). Polar residues predominate over residues 1530-1547 (YDSQTQVPAMQADSQGAQ). 2 positions are modified to phosphoserine: Ser-1543 and Ser-1571. Positions 1618 to 1630 (QLQSLAQAEASAS) are enriched in low complexity. Position 1637 is a phosphoserine (Ser-1637). A compositionally biased stretch (basic and acidic residues) spans 1645–1687 (LTEEGDAPKVEVQEEEMSTKSVKENKAQAEEDLQEPKGDLAES).

As to quaternary structure, binds to dimeric RII-alpha regulatory subunit of PKC. Post-translationally, phosphorylated by PKC (in vitro).

It localises to the cytoplasm. The protein resides in the cytoskeleton. The protein localises to the membrane. Anchoring protein that mediates the subcellular compartmentation of protein kinase A (PKA) and protein kinase C (PKC). This Rattus norvegicus (Rat) protein is A-kinase anchor protein 12 (Akap12).